A 108-amino-acid chain; its full sequence is Large ribosomal subunit protein eL33A (108 aa).

The protein belongs to the eukaryotic ribosomal protein eL33 family. As to quaternary structure, component of the large ribosomal subunit (LSU). Mature yeast ribosomes consist of a small (40S) and a large (60S) subunit. The 40S small subunit contains 1 molecule of ribosomal RNA (18S rRNA) and at least 33 different proteins. The large 60S subunit contains 3 rRNA molecules (25S, 5.8S and 5S rRNA) and at least 46 different proteins.

Its subcellular location is the cytoplasm. It localises to the nucleus. It is found in the nucleolus. Its function is as follows. Component of the ribosome, a large ribonucleoprotein complex responsible for the synthesis of proteins in the cell. The small ribosomal subunit (SSU) binds messenger RNAs (mRNAs) and translates the encoded message by selecting cognate aminoacyl-transfer RNA (tRNA) molecules. The large subunit (LSU) contains the ribosomal catalytic site termed the peptidyl transferase center (PTC), which catalyzes the formation of peptide bonds, thereby polymerizing the amino acids delivered by tRNAs into a polypeptide chain. The nascent polypeptides leave the ribosome through a tunnel in the LSU and interact with protein factors that function in enzymatic processing, targeting, and the membrane insertion of nascent chains at the exit of the ribosomal tunnel. The sequence is that of Large ribosomal subunit protein eL33A (rpl35b) from Schizosaccharomyces pombe (strain 972 / ATCC 24843) (Fission yeast).